Reading from the N-terminus, the 194-residue chain is Peptidyl-tRNA hydrolase (194 aa).

Residue Tyr-17 participates in tRNA binding. Residue His-22 is the Proton acceptor of the active site. TRNA contacts are provided by Phe-68, Asn-70, and Asn-116.

This sequence belongs to the PTH family. In terms of assembly, monomer.

It localises to the cytoplasm. It carries out the reaction an N-acyl-L-alpha-aminoacyl-tRNA + H2O = an N-acyl-L-amino acid + a tRNA + H(+). Its function is as follows. Hydrolyzes ribosome-free peptidyl-tRNAs (with 1 or more amino acids incorporated), which drop off the ribosome during protein synthesis, or as a result of ribosome stalling. Functionally, catalyzes the release of premature peptidyl moieties from peptidyl-tRNA molecules trapped in stalled 50S ribosomal subunits, and thus maintains levels of free tRNAs and 50S ribosomes. The polypeptide is Peptidyl-tRNA hydrolase (Haemophilus ducreyi (strain 35000HP / ATCC 700724)).